Here is a 65-residue protein sequence, read N- to C-terminus: UPF0434 protein HSM_0997 (65 aa).

The protein belongs to the UPF0434 family.

This chain is UPF0434 protein HSM_0997, found in Histophilus somni (strain 2336) (Haemophilus somnus).